The following is a 122-amino-acid chain: Small ribosomal subunit protein uS13 (122 aa).

Positions 94 to 122 are disordered; the sequence is GLPVRGQVTQKNARTRKGPRKTVAGKKGK. Basic residues predominate over residues 106–122; that stretch reads ARTRKGPRKTVAGKKGK.

Belongs to the universal ribosomal protein uS13 family. Part of the 30S ribosomal subunit. Forms a loose heterodimer with protein S19. Forms two bridges to the 50S subunit in the 70S ribosome.

Functionally, located at the top of the head of the 30S subunit, it contacts several helices of the 16S rRNA. In the 70S ribosome it contacts the 23S rRNA (bridge B1a) and protein L5 of the 50S subunit (bridge B1b), connecting the 2 subunits; these bridges are implicated in subunit movement. Contacts the tRNAs in the A and P-sites. In Mycoplasma mobile (strain ATCC 43663 / 163K / NCTC 11711) (Mesomycoplasma mobile), this protein is Small ribosomal subunit protein uS13.